A 580-amino-acid polypeptide reads, in one-letter code: MPNRNILYATTLVDELARAGLRHVCLAPGSRNTPLVLAFARHPAIRVFSHLDERSAAFFALGLALATDTPAAVVCTSGSAAANFFPAIVEAHQAGVPLLALTADRPHELRDSGANQTIDQVKMFGSFARWSVDVALPEAMPPPVALRNLRTLAARAMAIAGGEPRGVVHLNLPFRPPLEPTPMPGDLTEPPAAAQPRDDGAPYTCFLRSAPPAPPEAVIEPIAAVLEQHERGLIVCGPRCPGGAFGALVSELSQRTGYPALVDGVSGVRFGYPGVIGGYETFLFGEHAFPPPEVVLRFGAVLTSKWLNQYLDTAASPVVIHVRASGVWADDSHRVSHFVVADEAAFIRALIPRLTERQSAWRQRFVEAEARVWAAVEAGIADEPYFDGGAVYDVIDLLPEGASLFVGNSLPVRHLDQFGKPGVRHICAFANRGASGIDGNISTALGIGAGRPDAPLAAIVGDITFYHDMNGLLAVRRCGVPATIVLLNNDGGGIFHRLPINRFEPEFTDYFVTPHGLDFAHAAKMYGLEYVPVKDRTAFRSAFRASIDARAATLIELRTDARTDLVRRNALIQAARATGA.

The disordered stretch occupies residues L178–D199.

The protein belongs to the TPP enzyme family. MenD subfamily. In terms of assembly, homodimer. Requires Mg(2+) as cofactor. Mn(2+) serves as cofactor. It depends on thiamine diphosphate as a cofactor.

It carries out the reaction isochorismate + 2-oxoglutarate + H(+) = 5-enolpyruvoyl-6-hydroxy-2-succinyl-cyclohex-3-ene-1-carboxylate + CO2. It participates in quinol/quinone metabolism; 1,4-dihydroxy-2-naphthoate biosynthesis; 1,4-dihydroxy-2-naphthoate from chorismate: step 2/7. It functions in the pathway quinol/quinone metabolism; menaquinone biosynthesis. Its function is as follows. Catalyzes the thiamine diphosphate-dependent decarboxylation of 2-oxoglutarate and the subsequent addition of the resulting succinic semialdehyde-thiamine pyrophosphate anion to isochorismate to yield 2-succinyl-5-enolpyruvyl-6-hydroxy-3-cyclohexene-1-carboxylate (SEPHCHC). The protein is 2-succinyl-5-enolpyruvyl-6-hydroxy-3-cyclohexene-1-carboxylate synthase of Roseiflexus castenholzii (strain DSM 13941 / HLO8).